Consider the following 282-residue polypeptide: Elongation factor Ts (282 aa).

An involved in Mg(2+) ion dislocation from EF-Tu region spans residues 80–83; it reads TDFV.

It belongs to the EF-Ts family.

The protein resides in the cytoplasm. Functionally, associates with the EF-Tu.GDP complex and induces the exchange of GDP to GTP. It remains bound to the aminoacyl-tRNA.EF-Tu.GTP complex up to the GTP hydrolysis stage on the ribosome. This Chlamydia felis (strain Fe/C-56) (Chlamydophila felis) protein is Elongation factor Ts.